We begin with the raw amino-acid sequence, 405 residues long: Multifunctional CCA protein (405 aa).

Gly8 and Arg11 together coordinate ATP. Residues Gly8 and Arg11 each coordinate CTP. Positions 21 and 23 each coordinate Mg(2+). ATP contacts are provided by Arg91, Arg137, and Arg140. Residues Arg91, Arg137, and Arg140 each contribute to the CTP site. Positions Thr225–Leu326 constitute an HD domain.

It belongs to the tRNA nucleotidyltransferase/poly(A) polymerase family. Bacterial CCA-adding enzyme type 1 subfamily. In terms of assembly, monomer. Can also form homodimers and oligomers. Mg(2+) serves as cofactor. It depends on Ni(2+) as a cofactor.

The enzyme catalyses a tRNA precursor + 2 CTP + ATP = a tRNA with a 3' CCA end + 3 diphosphate. It carries out the reaction a tRNA with a 3' CCA end + 2 CTP + ATP = a tRNA with a 3' CCACCA end + 3 diphosphate. In terms of biological role, catalyzes the addition and repair of the essential 3'-terminal CCA sequence in tRNAs without using a nucleic acid template. Adds these three nucleotides in the order of C, C, and A to the tRNA nucleotide-73, using CTP and ATP as substrates and producing inorganic pyrophosphate. tRNA 3'-terminal CCA addition is required both for tRNA processing and repair. Also involved in tRNA surveillance by mediating tandem CCA addition to generate a CCACCA at the 3' terminus of unstable tRNAs. While stable tRNAs receive only 3'-terminal CCA, unstable tRNAs are marked with CCACCA and rapidly degraded. The protein is Multifunctional CCA protein of Laribacter hongkongensis (strain HLHK9).